A 365-amino-acid chain; its full sequence is Succinyl-diaminopimelate desuccinylase (365 aa).

Position 65 (His-65) interacts with Zn(2+). Asp-67 is a catalytic residue. Asp-96 is a binding site for Zn(2+). The active-site Proton acceptor is Glu-126. Positions 127, 155, and 340 each coordinate Zn(2+).

The protein belongs to the peptidase M20A family. DapE subfamily. Homodimer. It depends on Zn(2+) as a cofactor. Co(2+) is required as a cofactor.

It carries out the reaction N-succinyl-(2S,6S)-2,6-diaminopimelate + H2O = (2S,6S)-2,6-diaminopimelate + succinate. Its pathway is amino-acid biosynthesis; L-lysine biosynthesis via DAP pathway; LL-2,6-diaminopimelate from (S)-tetrahydrodipicolinate (succinylase route): step 3/3. In terms of biological role, catalyzes the hydrolysis of N-succinyl-L,L-diaminopimelic acid (SDAP), forming succinate and LL-2,6-diaminopimelate (DAP), an intermediate involved in the bacterial biosynthesis of lysine and meso-diaminopimelic acid, an essential component of bacterial cell walls. The protein is Succinyl-diaminopimelate desuccinylase of Campylobacter jejuni subsp. doylei (strain ATCC BAA-1458 / RM4099 / 269.97).